Consider the following 678-residue polypeptide: Glycine--tRNA ligase beta subunit (678 aa).

Belongs to the class-II aminoacyl-tRNA synthetase family. As to quaternary structure, tetramer of two alpha and two beta subunits.

It is found in the cytoplasm. It carries out the reaction tRNA(Gly) + glycine + ATP = glycyl-tRNA(Gly) + AMP + diphosphate. The chain is Glycine--tRNA ligase beta subunit from Streptococcus pneumoniae (strain 70585).